The primary structure comprises 704 residues: Elongation factor G (704 aa).

The tr-type G domain maps to 10 to 290 (NKVRNIGIMA…AVVDFLPSPL (281 aa)). GTP contacts are provided by residues 19–26 (AHIDAGKT), 83–87 (DTPGH), and 137–140 (NKMD). A disordered region spans residues 293-313 (PPMIGHDPRNEETEMTRKPST). Over residues 298 to 313 (HDPRNEETEMTRKPST) the composition is skewed to basic and acidic residues.

Belongs to the TRAFAC class translation factor GTPase superfamily. Classic translation factor GTPase family. EF-G/EF-2 subfamily.

The protein localises to the cytoplasm. Its function is as follows. Catalyzes the GTP-dependent ribosomal translocation step during translation elongation. During this step, the ribosome changes from the pre-translocational (PRE) to the post-translocational (POST) state as the newly formed A-site-bound peptidyl-tRNA and P-site-bound deacylated tRNA move to the P and E sites, respectively. Catalyzes the coordinated movement of the two tRNA molecules, the mRNA and conformational changes in the ribosome. The sequence is that of Elongation factor G from Renibacterium salmoninarum (strain ATCC 33209 / DSM 20767 / JCM 11484 / NBRC 15589 / NCIMB 2235).